The chain runs to 269 residues: MVLSDSLKLPSPTLSAAAGVDDCDGEDHPTCQNCFTVKTPLWRRDEHGTVLCNACGLFLKLHGEPRPISLKTDTIKSRNRKKLNNNNVNTNANTHSNDPNKIFKRKKRLLTTGGGSLPTNNPKVSILEKFMVSGSIKPLLKPKETVPNTKECSTQRGKFSLDPCEPSGKNYLYQINGSDIYTSNIELTRLPNLSTLLEPSPFSDSAVPEIELTWKLHNEEEVIKLKTKISELELVTDLYKKHIFQLNEKCKQLEVELHSRASVQSHPQH.

The segment at 31-55 adopts a GATA-type zinc-finger fold; that stretch reads CQNCFTVKTPLWRRDEHGTVLCNAC.

It localises to the nucleus. Functionally, negative regulator of multiple nitrogen catabolic genes including the allantoin pathway genes. This chain is Nitrogen regulatory protein DAL80 (DAL80), found in Saccharomyces cerevisiae (strain ATCC 204508 / S288c) (Baker's yeast).